We begin with the raw amino-acid sequence, 119 residues long: NADH-quinone oxidoreductase subunit A (119 aa).

Helical transmembrane passes span 7 to 27 (FPVL…MFLG), 63 to 83 (LIAI…PWGV), and 88 to 108 (IGWF…VGFV).

Belongs to the complex I subunit 3 family. NDH-1 is composed of 14 different subunits. Subunits NuoA, H, J, K, L, M, N constitute the membrane sector of the complex.

It is found in the cell membrane. The enzyme catalyses a quinone + NADH + 5 H(+)(in) = a quinol + NAD(+) + 4 H(+)(out). Functionally, NDH-1 shuttles electrons from NADH, via FMN and iron-sulfur (Fe-S) centers, to quinones in the respiratory chain. The immediate electron acceptor for the enzyme in this species is believed to be ubiquinone. Couples the redox reaction to proton translocation (for every two electrons transferred, four hydrogen ions are translocated across the cytoplasmic membrane), and thus conserves the redox energy in a proton gradient. The chain is NADH-quinone oxidoreductase subunit A from Polynucleobacter asymbioticus (strain DSM 18221 / CIP 109841 / QLW-P1DMWA-1) (Polynucleobacter necessarius subsp. asymbioticus).